The primary structure comprises 357 residues: Glutamine synthetase (357 aa).

The GS beta-grasp domain maps to 25-104; it reads VMAEYIWIDA…VLCETWDSDG (80 aa). In terms of domain architecture, GS catalytic spans 111–357; the sequence is YRHDCARLME…IIAETLCGGL (247 aa).

Belongs to the glutamine synthetase family. In terms of assembly, homooctamer.

Its subcellular location is the cytoplasm. The enzyme catalyses L-glutamate + NH4(+) + ATP = L-glutamine + ADP + phosphate + H(+). This Emericella nidulans (strain FGSC A4 / ATCC 38163 / CBS 112.46 / NRRL 194 / M139) (Aspergillus nidulans) protein is Glutamine synthetase (glnA).